The sequence spans 151 residues: UPF0208 membrane protein YfbV (151 aa).

Transmembrane regions (helical) follow at residues 46-65 (YAIR…QIAL) and 69-91 (LGPA…WWLG).

This sequence belongs to the UPF0208 family.

It is found in the cell inner membrane. The polypeptide is UPF0208 membrane protein YfbV (Salmonella choleraesuis (strain SC-B67)).